The following is a 428-amino-acid chain: Probable mitochondrial adenine nucleotide transporter BTL3 (428 aa).

3 Solcar repeats span residues leucine 129–glutamine 212, threonine 222–alanine 307, and leucine 336–valine 421. Helical transmembrane passes span threonine 132–leucine 152, glycine 187–aspartate 207, phenylalanine 228–isoleucine 248, leucine 283–isoleucine 303, leucine 342–valine 362, and valine 390–isoleucine 410.

The protein belongs to the mitochondrial carrier (TC 2.A.29) family.

Its subcellular location is the mitochondrion inner membrane. In terms of biological role, probable mitochondrial adenylate carrier that catalyzes the transport of ATP, ADP and AMP. The chain is Probable mitochondrial adenine nucleotide transporter BTL3 from Arabidopsis thaliana (Mouse-ear cress).